Reading from the N-terminus, the 95-residue chain is Co-chaperonin GroES (95 aa).

Belongs to the GroES chaperonin family. In terms of assembly, heptamer of 7 subunits arranged in a ring. Interacts with the chaperonin GroEL.

It localises to the cytoplasm. Functionally, together with the chaperonin GroEL, plays an essential role in assisting protein folding. The GroEL-GroES system forms a nano-cage that allows encapsulation of the non-native substrate proteins and provides a physical environment optimized to promote and accelerate protein folding. GroES binds to the apical surface of the GroEL ring, thereby capping the opening of the GroEL channel. The polypeptide is Co-chaperonin GroES (Clostridium acetobutylicum (strain ATCC 824 / DSM 792 / JCM 1419 / IAM 19013 / LMG 5710 / NBRC 13948 / NRRL B-527 / VKM B-1787 / 2291 / W)).